The following is a 584-amino-acid chain: Arginine--tRNA ligase (584 aa).

Positions 127-137 (PNLAKEMHVGH) match the 'HIGH' region motif.

Belongs to the class-I aminoacyl-tRNA synthetase family. In terms of assembly, monomer.

It is found in the cytoplasm. It catalyses the reaction tRNA(Arg) + L-arginine + ATP = L-arginyl-tRNA(Arg) + AMP + diphosphate. This Alcanivorax borkumensis (strain ATCC 700651 / DSM 11573 / NCIMB 13689 / SK2) protein is Arginine--tRNA ligase.